Reading from the N-terminus, the 267-residue chain is Putative F-box protein At1g61060 (267 aa).

Positions 15-63 (DYFDAIHVDLFTAKILSKLPVKSIAQCRCVSKLWSSQIRRPYYNMLFPI) constitute an F-box domain.

The polypeptide is Putative F-box protein At1g61060 (Arabidopsis thaliana (Mouse-ear cress)).